The following is a 427-amino-acid chain: Serine protease HTRA2, mitochondrial (427 aa).

Residues 33–55 are disordered; the sequence is HTASSSKGSGGDNSKDKENNGQN. A helical membrane pass occupies residues 66–86; it reads SAFQFCVPFSLGALVSAVLIE. Positions 78–81 match the IAP-binding motif; the sequence is ALVS. The interval 144–307 is serine protease; sequence SNGSGFVIEQ…IPIDYVKVFL (164 aa). Residues His162, Asp194, and Ser271 each act as charge relay system in the active site. The PDZ domain maps to 330–415; sequence MGITMLTLTP…DLEIVILRGV (86 aa).

This sequence belongs to the peptidase S1C family. Interacts with th/DIAP1 (via BIR 2 domain).

It localises to the mitochondrion intermembrane space. Its subcellular location is the mitochondrion membrane. The catalysed reaction is Cleavage of non-polar aliphatic amino-acids at the P1 position, with a preference for Val, Ile and Met. At the P2 and P3 positions, Arg is selected most strongly with a secondary preference for other hydrophilic residues.. Serine protease that shows proteolytic activity against a non-specific substrate beta-casein. Promotes or induces cell death either by direct binding to and inhibition of BIRC proteins (also called inhibitor of apoptosis proteins, IAPs), leading to an increase in caspase activity, or by a BIRC inhibition-independent, caspase-independent and serine protease activity-dependent mechanism. Can antagonize antiapoptotic activity of th/Diap1 by directly inducing the degradation of th/Diap1. This is Serine protease HTRA2, mitochondrial from Drosophila pseudoobscura pseudoobscura (Fruit fly).